A 350-amino-acid chain; its full sequence is Biotin synthase (350 aa).

The region spanning 54–278 (REIQLSTLLS…TMPQSYVRLS (225 aa)) is the Radical SAM core domain. [4Fe-4S] cluster-binding residues include Cys-69, Cys-73, and Cys-76. 4 residues coordinate [2Fe-2S] cluster: Cys-113, Cys-144, Cys-204, and Arg-276.

It belongs to the radical SAM superfamily. Biotin synthase family. Homodimer. The cofactor is [4Fe-4S] cluster. [2Fe-2S] cluster is required as a cofactor.

The enzyme catalyses (4R,5S)-dethiobiotin + (sulfur carrier)-SH + 2 reduced [2Fe-2S]-[ferredoxin] + 2 S-adenosyl-L-methionine = (sulfur carrier)-H + biotin + 2 5'-deoxyadenosine + 2 L-methionine + 2 oxidized [2Fe-2S]-[ferredoxin]. It participates in cofactor biosynthesis; biotin biosynthesis; biotin from 7,8-diaminononanoate: step 2/2. In terms of biological role, catalyzes the conversion of dethiobiotin (DTB) to biotin by the insertion of a sulfur atom into dethiobiotin via a radical-based mechanism. The chain is Biotin synthase from Neisseria meningitidis serogroup C (strain 053442).